A 252-amino-acid polypeptide reads, in one-letter code: Hydroxyacylglutathione hydrolase (252 aa).

Zn(2+) is bound by residues histidine 54, histidine 56, aspartate 58, histidine 59, histidine 111, aspartate 130, and histidine 170.

The protein belongs to the metallo-beta-lactamase superfamily. Glyoxalase II family. Monomer. Requires Zn(2+) as cofactor.

It carries out the reaction an S-(2-hydroxyacyl)glutathione + H2O = a 2-hydroxy carboxylate + glutathione + H(+). It functions in the pathway secondary metabolite metabolism; methylglyoxal degradation; (R)-lactate from methylglyoxal: step 2/2. Functionally, thiolesterase that catalyzes the hydrolysis of S-D-lactoyl-glutathione to form glutathione and D-lactic acid. This chain is Hydroxyacylglutathione hydrolase, found in Francisella tularensis subsp. holarctica (strain FTNF002-00 / FTA).